The sequence spans 433 residues: 3-phosphoshikimate 1-carboxyvinyltransferase (433 aa).

Positions 22, 23, and 27 each coordinate 3-phosphoshikimate. Lysine 22 contacts phosphoenolpyruvate. 2 residues coordinate phosphoenolpyruvate: glycine 95 and arginine 123. 3-phosphoshikimate contacts are provided by serine 167, glutamine 169, aspartate 315, and lysine 342. Position 169 (glutamine 169) interacts with phosphoenolpyruvate. Aspartate 315 serves as the catalytic Proton acceptor. 2 residues coordinate phosphoenolpyruvate: arginine 346 and arginine 387.

It belongs to the EPSP synthase family. Monomer.

It is found in the cytoplasm. It carries out the reaction 3-phosphoshikimate + phosphoenolpyruvate = 5-O-(1-carboxyvinyl)-3-phosphoshikimate + phosphate. Its pathway is metabolic intermediate biosynthesis; chorismate biosynthesis; chorismate from D-erythrose 4-phosphate and phosphoenolpyruvate: step 6/7. Catalyzes the transfer of the enolpyruvyl moiety of phosphoenolpyruvate (PEP) to the 5-hydroxyl of shikimate-3-phosphate (S3P) to produce enolpyruvyl shikimate-3-phosphate and inorganic phosphate. In Legionella pneumophila (strain Paris), this protein is 3-phosphoshikimate 1-carboxyvinyltransferase.